The sequence spans 140 residues: Large ribosomal subunit protein uL16 (140 aa).

It belongs to the universal ribosomal protein uL16 family. In terms of assembly, part of the 50S ribosomal subunit.

Functionally, binds 23S rRNA and is also seen to make contacts with the A and possibly P site tRNAs. The polypeptide is Large ribosomal subunit protein uL16 (Malacoplasma penetrans (strain HF-2) (Mycoplasma penetrans)).